Reading from the N-terminus, the 246-residue chain is Histone H1 (246 aa).

Disordered stretches follow at residues 1 to 51 and 105 to 246; these read MATD…PTHL and GGKL…KAKK. Residues 9-34 show a composition bias toward low complexity; the sequence is PAPLVDAAPEAPADAPAAPAADANAA. Residues 35–47 are compositionally biased toward basic residues; it reads KAKKATAPKKRAS. Residues 49–119 form the H15 domain; that stretch reads THLPYAEMVS…KVKNSYKLSS (71 aa). Basic residues-rich tracts occupy residues 129-189 and 198-208; these read AAPK…KAKP and PLAKKAGRAKA. Over residues 224–235 the composition is skewed to low complexity; sequence KKAAPSKKAATP.

This sequence belongs to the histone H1/H5 family.

The protein localises to the nucleus. It is found in the chromosome. Its function is as follows. Histones H1 are necessary for the condensation of nucleosome chains into higher-order structures. The protein is Histone H1 of Zea mays (Maize).